The following is a 139-amino-acid chain: Large ribosomal subunit protein uL16 (139 aa).

A compositionally biased stretch (basic residues) spans 1–19 (MLIPRRVKYRKQHHPKRTG). Positions 1–23 (MLIPRRVKYRKQHHPKRTGAAKG) are disordered.

Belongs to the universal ribosomal protein uL16 family. Part of the 50S ribosomal subunit.

Functionally, binds 23S rRNA and is also seen to make contacts with the A and possibly P site tRNAs. The chain is Large ribosomal subunit protein uL16 from Cutibacterium acnes (strain DSM 16379 / KPA171202) (Propionibacterium acnes).